The following is an 81-amino-acid chain: Photosystem I iron-sulfur center (81 aa).

4Fe-4S ferredoxin-type domains are found at residues 2–31 and 39–68; these read SHIVKIYDTCIGCTQCVRACPLDVLEMVPW and MASAPRTEDCVGCKRCESACPTDFLSVRVY. [4Fe-4S] cluster is bound by residues Cys-11, Cys-14, Cys-17, Cys-21, Cys-48, Cys-51, Cys-54, and Cys-58.

The eukaryotic PSI reaction center is composed of at least 11 subunits. The cofactor is [4Fe-4S] cluster.

It localises to the plastid. The protein localises to the chloroplast thylakoid membrane. The catalysed reaction is reduced [plastocyanin] + hnu + oxidized [2Fe-2S]-[ferredoxin] = oxidized [plastocyanin] + reduced [2Fe-2S]-[ferredoxin]. Apoprotein for the two 4Fe-4S centers FA and FB of photosystem I (PSI); essential for photochemical activity. FB is the terminal electron acceptor of PSI, donating electrons to ferredoxin. The C-terminus interacts with PsaA/B/D and helps assemble the protein into the PSI complex. Required for binding of PsaD and PsaE to PSI. PSI is a plastocyanin/cytochrome c6-ferredoxin oxidoreductase, converting photonic excitation into a charge separation, which transfers an electron from the donor P700 chlorophyll pair to the spectroscopically characterized acceptors A0, A1, FX, FA and FB in turn. In Stigeoclonium helveticum (Green alga), this protein is Photosystem I iron-sulfur center.